The sequence spans 264 residues: Thymidylate synthase (264 aa).

Arginine 21 lines the dUMP pocket. Histidine 51 serves as a coordination point for (6R)-5,10-methylene-5,6,7,8-tetrahydrofolate. 126 to 127 (RR) contacts dUMP. Cysteine 146 acts as the Nucleophile in catalysis. DUMP-binding positions include 166-169 (RSAD), asparagine 177, and 207-209 (HLY). Aspartate 169 serves as a coordination point for (6R)-5,10-methylene-5,6,7,8-tetrahydrofolate. Alanine 263 serves as a coordination point for (6R)-5,10-methylene-5,6,7,8-tetrahydrofolate.

Belongs to the thymidylate synthase family. Bacterial-type ThyA subfamily. In terms of assembly, homodimer.

Its subcellular location is the cytoplasm. It catalyses the reaction dUMP + (6R)-5,10-methylene-5,6,7,8-tetrahydrofolate = 7,8-dihydrofolate + dTMP. It functions in the pathway pyrimidine metabolism; dTTP biosynthesis. Functionally, catalyzes the reductive methylation of 2'-deoxyuridine-5'-monophosphate (dUMP) to 2'-deoxythymidine-5'-monophosphate (dTMP) while utilizing 5,10-methylenetetrahydrofolate (mTHF) as the methyl donor and reductant in the reaction, yielding dihydrofolate (DHF) as a by-product. This enzymatic reaction provides an intracellular de novo source of dTMP, an essential precursor for DNA biosynthesis. This Paramagnetospirillum magneticum (strain ATCC 700264 / AMB-1) (Magnetospirillum magneticum) protein is Thymidylate synthase.